The sequence spans 580 residues: Extracellular protease (580 aa).

Residues 1-32 (MSTASLRKRTGSLTILGASALTSLLLAMPAFA) form the signal peptide. Positions 33-136 (GEVYLDGLAT…VEVDQILHAT (104 aa)) are excised as a propeptide. Residues 147-465 (QWAFGTTNAG…AGIVNADAAV (319 aa)) enclose the Peptidase S8 domain. Residues aspartate 177 and histidine 237 each act as charge relay system in the active site. 2 disulfides stabilise this stretch: cysteine 225–cysteine 273 and cysteine 315–cysteine 352. Serine 409 functions as the Charge relay system in the catalytic mechanism. A disulfide bridge connects residues cysteine 450 and cysteine 454.

This sequence belongs to the peptidase S8 family.

The protein localises to the secreted. The chain is Extracellular protease from Xanthomonas campestris pv. campestris (strain ATCC 33913 / DSM 3586 / NCPPB 528 / LMG 568 / P 25).